A 120-amino-acid polypeptide reads, in one-letter code: UPF0102 protein NT01CX_2205 (120 aa).

Belongs to the UPF0102 family.

The chain is UPF0102 protein NT01CX_2205 from Clostridium novyi (strain NT).